The following is a 164-amino-acid chain: ATP synthase subunit b (164 aa).

Residues 10–30 (LLISQIVNFCLLAFLLNTFLY) form a helical membrane-spanning segment.

It belongs to the ATPase B chain family. In terms of assembly, F-type ATPases have 2 components, F(1) - the catalytic core - and F(0) - the membrane proton channel. F(1) has five subunits: alpha(3), beta(3), gamma(1), delta(1), epsilon(1). F(0) has three main subunits: a(1), b(2) and c(10-14). The alpha and beta chains form an alternating ring which encloses part of the gamma chain. F(1) is attached to F(0) by a central stalk formed by the gamma and epsilon chains, while a peripheral stalk is formed by the delta and b chains.

Its subcellular location is the cell membrane. Its function is as follows. F(1)F(0) ATP synthase produces ATP from ADP in the presence of a proton or sodium gradient. F-type ATPases consist of two structural domains, F(1) containing the extramembraneous catalytic core and F(0) containing the membrane proton channel, linked together by a central stalk and a peripheral stalk. During catalysis, ATP synthesis in the catalytic domain of F(1) is coupled via a rotary mechanism of the central stalk subunits to proton translocation. Component of the F(0) channel, it forms part of the peripheral stalk, linking F(1) to F(0). The polypeptide is ATP synthase subunit b (Herpetosiphon aurantiacus (strain ATCC 23779 / DSM 785 / 114-95)).